We begin with the raw amino-acid sequence, 360 residues long: Mannose-1-phosphate guanyltransferase beta-B (360 aa).

It belongs to the transferase hexapeptide repeat family.

The catalysed reaction is alpha-D-mannose 1-phosphate + GTP + H(+) = GDP-alpha-D-mannose + diphosphate. The protein operates within nucleotide-sugar biosynthesis; GDP-alpha-D-mannose biosynthesis; GDP-alpha-D-mannose from alpha-D-mannose 1-phosphate (GTP route): step 1/1. Functionally, catalyzes the formation of GDP-mannose, an essential precursor of glycan moieties of glycoproteins and glycolipids. In Xenopus laevis (African clawed frog), this protein is Mannose-1-phosphate guanyltransferase beta-B (gmppb-b).